Consider the following 3977-residue polypeptide: Hybrid PKS-NRPS synthetase gkaA (3977 aa).

The region spanning 4–441 is the Ketosynthase family 3 (KS3) domain; it reads EEPIAVIGSG…GTNAHVILEN (438 aa). Catalysis depends on for beta-ketoacyl synthase activity residues Cys177, His316, and His361. Residues 551-867 form the Malonyl-CoA:ACP transacylase (MAT) domain; that stretch reads VFTGQGAQWP…TGVIHRGKND (317 aa). The tract at residues 937–1072 is N-terminal hotdog fold; sequence NPLLGTRTTD…GRITVTLGES (136 aa). The PKS/mFAS DH domain maps to 937–1241; sequence NPLLGTRTTD…VVAFSEATAD (305 aa). The Proton acceptor; for dehydratase activity role is filled by His969. The interval 1087–1241 is C-terminal hotdog fold; the sequence is LVSIPQDRFY…VVAFSEATAD (155 aa). The active-site Proton donor; for dehydratase activity is the Asp1147. A methyltransferase (cMeT) domain region spans residues 1286 to 1580; sequence YMKKTVEEFP…FSGIDSSTPE (295 aa). Positions 2128–2301 constitute a Ketoreductase (KR) domain; the sequence is TYVLFGLTSD…AASILHIGAV (174 aa). A Carrier 1 domain is found at 2409–2490; that stretch reads SEVFEIISGA…QLLEYAIDNM (82 aa). At Ser2450 the chain carries O-(pantetheine 4'-phosphoryl)serine. The interval 2497-2542 is disordered; it reads HSNGEQGTVSDSGSTNIQLTPASTPSVPSVNLASDSTGSSQVGEDV. Over residues 2499 to 2538 the composition is skewed to polar residues; the sequence is NGEQGTVSDSGSTNIQLTPASTPSVPSVNLASDSTGSSQV. Positions 2584 to 3018 are condensation; that stretch reads EKIIPMSPGQ…LKDISLFSKE (435 aa). Positions 3048–3437 are adenylation; the sequence is IAEHPDTISI…GALEILGRID (390 aa). The 81-residue stretch at 3552 to 3632 folds into the Carrier 2 domain; it reads FSLTPTEDKL…AMASLITPAS (81 aa). Ser3592 carries the O-(pantetheine 4'-phosphoryl)serine modification. The region spanning 3672–3890 is the Thioester reductase (TE) domain; it reads LTGATGFLGH…FVDLVSVQNV (219 aa).

In the C-terminal section; belongs to the NRP synthetase family. It depends on pantetheine 4'-phosphate as a cofactor.

It participates in mycotoxin biosynthesis. In terms of biological role, hybrid PKS-NRPS synthetase; part of the gene cluster that mediates the biosynthesis of GKK1032, fungal natural products containing a macrocyclic para-cyclophane connected to a decahydrofluorene ring system that show potent antitumor activities. Within the pathway, the PKS-NRPS gkaA, with the help of the trans-enoyl reductase gkaC, synthesize the polyketide-tyrosyl acyl thioester product which can be reductively off-loaded by the terminal reductase (R) domain in gkaA. The PKS module of gkaA acts in combination with the trans-acting enoyl reductase gkaC to produce a methylated polyketide attached to the ACP domain. In parallel, the adenylation (A) domain of the NRPS module activated L-tyrosine, which is then transferred to the ACP domain. The condensation (C) domain subsequently links this group to the polyketide chain, forming an enzyme-bound amide. The alpha/beta hydrolase gkaG is then required to catalyze the subsequent Knoevenagel condensation that affords the 3-pyrrolin-2-one ring, whereas the three proteins gkaB, gkadX and gkaZ then function synergistically to form the cyclophane. The chain is Hybrid PKS-NRPS synthetase gkaA from Penicillium citrinum.